Reading from the N-terminus, the 83-residue chain is Hainantoxin-III (83 aa).

Positions 1-21 (MKASMFLALAGLVLLFVVGYA) are cleaved as a signal peptide. Positions 22 to 48 (SESEEKEFPRELLSKIFALDDFKGEER) are excised as a propeptide. 3 disulfides stabilise this stretch: C50–C65, C57–C70, and C64–C77. L81 carries the leucine amide modification.

It belongs to the neurotoxin 10 (Hwtx-1) family. 15 (Hntx-3) subfamily. Monomer. In terms of tissue distribution, expressed by the venom gland.

Its subcellular location is the secreted. Functionally, selective antagonist of neuronal tetrodotoxin (TTX)-sensitive voltage-gated sodium channels (IC(50)=1270 nM on Nav1.1/SCN1A, 270 nM on Nav1.2/SCN2A, 491 nM on Nav1.3/SCN3A and 232 nM on Nav1.7/SCN9A). This toxin suppress Nav1.7 current amplitude without significantly altering the activation, inactivation, and repriming kinetics. Short extreme depolarizations partially activate the toxin-bound channel, indicating voltage-dependent inhibition of this toxin. This toxin increases the deactivation of the Nav1.7 current after extreme depolarizations. The toxin-Nav1.7 complex is gradually dissociated upon prolonged strong depolarizations in a voltage-dependent manner, and the unbound toxin rebinds to Nav1.7 after a long repolarization. Moreover, analysis of chimeric channels showed that the DIIS3-S4 linker is critical for toxin binding to Nav1.7. These data are consistent with this toxin interacting with Nav1.7 site 4 and trapping the domain II voltage sensor in the closed state. This Cyriopagopus hainanus (Chinese bird spider) protein is Hainantoxin-III.